We begin with the raw amino-acid sequence, 346 residues long: 4-hydroxy-3-methylbut-2-enyl diphosphate reductase (346 aa).

[4Fe-4S] cluster is bound at residue Cys19. Positions 48 and 84 each coordinate (2E)-4-hydroxy-3-methylbut-2-enyl diphosphate. Residues His48 and His84 each coordinate dimethylallyl diphosphate. Isopentenyl diphosphate contacts are provided by His48 and His84. Cys106 is a [4Fe-4S] cluster binding site. Residue His134 coordinates (2E)-4-hydroxy-3-methylbut-2-enyl diphosphate. His134 contacts dimethylallyl diphosphate. His134 is an isopentenyl diphosphate binding site. Glu136 serves as the catalytic Proton donor. Thr175 provides a ligand contact to (2E)-4-hydroxy-3-methylbut-2-enyl diphosphate. Cys205 lines the [4Fe-4S] cluster pocket. (2E)-4-hydroxy-3-methylbut-2-enyl diphosphate is bound by residues Ser233, Ser234, Asn235, and Ser278. Dimethylallyl diphosphate contacts are provided by Ser233, Ser234, Asn235, and Ser278. Positions 233, 234, 235, and 278 each coordinate isopentenyl diphosphate.

Belongs to the IspH family. Requires [4Fe-4S] cluster as cofactor.

It catalyses the reaction isopentenyl diphosphate + 2 oxidized [2Fe-2S]-[ferredoxin] + H2O = (2E)-4-hydroxy-3-methylbut-2-enyl diphosphate + 2 reduced [2Fe-2S]-[ferredoxin] + 2 H(+). The catalysed reaction is dimethylallyl diphosphate + 2 oxidized [2Fe-2S]-[ferredoxin] + H2O = (2E)-4-hydroxy-3-methylbut-2-enyl diphosphate + 2 reduced [2Fe-2S]-[ferredoxin] + 2 H(+). It functions in the pathway isoprenoid biosynthesis; dimethylallyl diphosphate biosynthesis; dimethylallyl diphosphate from (2E)-4-hydroxy-3-methylbutenyl diphosphate: step 1/1. Its pathway is isoprenoid biosynthesis; isopentenyl diphosphate biosynthesis via DXP pathway; isopentenyl diphosphate from 1-deoxy-D-xylulose 5-phosphate: step 6/6. In terms of biological role, catalyzes the conversion of 1-hydroxy-2-methyl-2-(E)-butenyl 4-diphosphate (HMBPP) into a mixture of isopentenyl diphosphate (IPP) and dimethylallyl diphosphate (DMAPP). Acts in the terminal step of the DOXP/MEP pathway for isoprenoid precursor biosynthesis. This Brucella suis biovar 1 (strain 1330) protein is 4-hydroxy-3-methylbut-2-enyl diphosphate reductase.